The following is a 460-amino-acid chain: Argininosuccinate lyase (460 aa).

This sequence belongs to the lyase 1 family. Argininosuccinate lyase subfamily.

Its subcellular location is the cytoplasm. The catalysed reaction is 2-(N(omega)-L-arginino)succinate = fumarate + L-arginine. It participates in amino-acid biosynthesis; L-arginine biosynthesis; L-arginine from L-ornithine and carbamoyl phosphate: step 3/3. The sequence is that of Argininosuccinate lyase from Nitratidesulfovibrio vulgaris (strain DSM 19637 / Miyazaki F) (Desulfovibrio vulgaris).